The sequence spans 67 residues: MTIINSISSLGKISNKNKSQANLNSNSTNSPNNVQGLNQNTGLVSSLLELVRGVTFALGLAVESVGL.

The segment at 18–37 is disordered; it reads KSQANLNSNSTNSPNNVQGL. Over residues 22-33 the composition is skewed to low complexity; that stretch reads NLNSNSTNSPNN.

This sequence belongs to the UPF0519 family.

The polypeptide is UPF0519 protein C (Dictyostelium discoideum (Social amoeba)).